Here is a 503-residue protein sequence, read N- to C-terminus: MAIQIPSRLLFIDGEWREPVLKKRIPIINPATEEIIGHIPAATAEDVELAVEAARRALSRNKGRDWASAPGAVRAKYLRAIAAKIGERKPEIAKLEAIDCGKPLDEAAWDIDDVSGCFEYYAELAEGLDAQQKAPISLPMEQFKSHVLKEPIGVVGLITPWNYPLLMATWKVAPALAAGCAAILKPSELASVTCLELADVCREVGLPPGVLNILTGLGHEAGAPLVSHPHVDKIAFTGSTMTGSKIMTAAAQLVKPVSLELGGKSPIVVFDDVDIDKAAEWTAFGCFWTNGQICSATSRLILHENIATEFLDRLLKWCKNIKIADPLEEGCRLGPVVSGGQYEKILKSIETAKSEGARVLSGGDRPEHLKKGFFIEPTIITDVTTSMQIWREEVFGPVLCVKTFSSEDEALELANDTHYGLGAAVISKDLERCDRFSKGLQAGIVWINCSQPCFCQAPWGGNKRSGFGRELGKWGLDNYLTVKQVTEYVSDDPWGWYTSPSKL.

Residues I28, D99, and L189 each coordinate Na(+). NAD(+) is bound at residue 238–245 (GSTMTGSK). E260 serves as the catalytic Proton acceptor. Residues C294 and E393 each contribute to the NAD(+) site. C294 acts as the Nucleophile in catalysis.

Belongs to the aldehyde dehydrogenase family. In terms of tissue distribution, expressed in leaves, flowers and fruits.

It is found in the cytoplasm. The protein localises to the cytosol. The catalysed reaction is 4-aminobutanal + NAD(+) + H2O = 4-aminobutanoate + NADH + 2 H(+). It catalyses the reaction 3-aminopropanal + NAD(+) + H2O = beta-alanine + NADH + 2 H(+). It participates in amine and polyamine biosynthesis; betaine biosynthesis via choline pathway; betaine from betaine aldehyde: step 1/1. Its function is as follows. Dehydrogenase that catalyzes the oxidation of several aminoaldehydes. Metabolizes and detoxifies aldehyde products of polyamine degradation to non-toxic amino acids. Catalyzes the oxidation of 4-aminobutanal and 3-aminopropanal to 4-aminobutanoate and beta-alanine, respectively. This Malus domestica (Apple) protein is Aminoaldehyde dehydrogenase 1, peroxisomal.